A 340-amino-acid chain; its full sequence is MIFVDACFGKETEYTPVWMMRQAGRYLPEYMEVRRKIGNFLDMTRNPEVVAEVTIQPIDILDVDAAILFSDILNLPMEMGLPLRFEKGVGPVFDKTIDTEEDIEALDSSADEKLEYVYKGVKLIRERLPEEKALIGFAGSPWTIATYMVEGRGSKQYAKIKKMVYSNPMMLHRLLAFNTKETIEYLSKQIDAGANAVMVFDSWGGALEKEKFFEFSWNYMKEIAKNIKAKYPHIPVILFSKGVGLYMDEMDGEFDVVGVDWATPIDHALRIFKDNYTLQGNMEPTRLYSKTATKEAVEKIAGIMKGHRHIFNLGHGILPDVPVENAKYFVNLCKELTRRG.

Substrate-binding positions include 21–25 (RQAGR), Asp71, Tyr147, Ser202, and His315.

It belongs to the uroporphyrinogen decarboxylase family. As to quaternary structure, homodimer.

Its subcellular location is the cytoplasm. The catalysed reaction is uroporphyrinogen III + 4 H(+) = coproporphyrinogen III + 4 CO2. Its pathway is porphyrin-containing compound metabolism; protoporphyrin-IX biosynthesis; coproporphyrinogen-III from 5-aminolevulinate: step 4/4. In terms of biological role, catalyzes the decarboxylation of four acetate groups of uroporphyrinogen-III to yield coproporphyrinogen-III. The polypeptide is Uroporphyrinogen decarboxylase (Nautilia profundicola (strain ATCC BAA-1463 / DSM 18972 / AmH)).